A 267-amino-acid polypeptide reads, in one-letter code: Protein I267L (267 aa).

The protein belongs to the asfivirus I267L family. In terms of assembly, interacts with host RNF135.

Plays a role in the inhibition of host RNA Pol-III-RIGI-mediated innate antiviral response. Mechanistically, interacts with host E3 ubiquitin ligase RNF135, disrupting RNF135-RIGI interaction and impairing RNF135-mediated 'Lys-63'-polyubiquitination and activation of RIGI. The protein is Protein I267L of African swine fever virus (strain Badajoz 1971 Vero-adapted) (Ba71V).